Consider the following 214-residue polypeptide: Small ribosomal subunit protein uS5 (214 aa).

The region spanning 55–118 (LKYERLDVGI…RNAKLNITPV (64 aa)) is the S5 DRBM domain.

This sequence belongs to the universal ribosomal protein uS5 family. In terms of assembly, part of the 30S ribosomal subunit. Contacts protein S4.

Its function is as follows. With S4 and S12 plays an important role in translational accuracy. This is Small ribosomal subunit protein uS5 from Staphylothermus marinus (strain ATCC 43588 / DSM 3639 / JCM 9404 / F1).